Here is a 199-residue protein sequence, read N- to C-terminus: Recombination protein RecR (199 aa).

The C4-type zinc-finger motif lies at 58–73; the sequence is CQTCRILSETDLCSLC. Residues 81-176 form the Toprim domain; sequence GQLCVVEMPS…TTTRIAHGVP (96 aa).

It belongs to the RecR family.

Functionally, may play a role in DNA repair. It seems to be involved in an RecBC-independent recombinational process of DNA repair. It may act with RecF and RecO. The chain is Recombination protein RecR from Nitrosococcus oceani (strain ATCC 19707 / BCRC 17464 / JCM 30415 / NCIMB 11848 / C-107).